Reading from the N-terminus, the 587-residue chain is MVLSRRFAQVSSDEEDDVPITRSKGRNSASPEESLGKRRKRKTVKLYEDFEEKEADRKKKRKGNKEDEDMAEGDDDQAEEETNPEAEEEEDEEEEEKPDDACPVGDSVNVTGKGKGKRTHFNQFAYDGNTYDLEVPVLLVPEDKSQKPYVAIIKDITQTKDGSMMILGQWFYRPEEAEKRGGGNWQSSDTRELFYSFHRDEVPAESVMHRCVVYFVPAHKQLPKRKNNPGFIVRKVYDTVEKKLWKLTDKDYEDSKQREIDVLVKKTMNVLGDLPDLESEDMLVDQENVLKAKRSFRKVNISPVDVRREEDASLKAETPGSGAGISSEHYAILEKFDSLTGDAHRDKCLGKLLEAVQHICYIPENKQAGDEAKVGSDASHLEQDEKDTKPENGKDEKFLWPDAAVPQVCALENASHASLASDFQKYNQKMRTLVFNLKNTALLARRLLNGELEPATILNMSPTELKEGLTADETTKKEPDDADRMQMTSVRCSRCSQLTVGLRDIIQAGHGDRYQLECVDCGYSWYASRDEVSTLTIVTDKPAQGTEKEDIEKNLTSPRETNKPKDEALKTNDSNADNNPEASKKPE.

The disordered stretch occupies residues 1–118; it reads MVLSRRFAQV…NVTGKGKGKR (118 aa). Over residues 66–98 the composition is skewed to acidic residues; sequence EDEDMAEGDDDQAEEETNPEAEEEEDEEEEEKP. Positions 129-248 constitute a BAH domain; sequence NTYDLEVPVL…TVEKKLWKLT (120 aa). Residues 344-493 enclose the TFIIS central domain; it reads HRDKCLGKLL…RMQMTSVRCS (150 aa). 2 disordered regions span residues 371-396 and 539-587; these read EAKV…GKDE and TDKP…KKPE. Residues 560-570 are compositionally biased toward basic and acidic residues; it reads ETNKPKDEALK. Residues 571–581 show a composition bias toward polar residues; the sequence is TNDSNADNNPE.

In terms of assembly, interacts with MOM1. Component of the ASI1-AIPP1-EDM2 (AAE) RNA regulatory complex composed of at least AIPP1/EDM3, ASI1 and EDM2 and may contain CPL2, AIPP2 and AIPP3/BDT1. Part of the BAH-PHD bivalent histone reader complex that contains AIPP2, PAIPP2 and AIPP3/BDT1; the BAH-PHD module associates with CPL2 to form the BAH-PHD-CPL2 complex (BPC) for transcriptional repression. Binds directly to CPL2, PHD1, PAIPP2/PHD2, AIPP2/PHD3, PHD4, PHD5 and PHD6. Expressed ubiquitously.

The protein resides in the nucleus. Transcriptional repressor. Together with PHD finger-containing proteins (e.g. PHD1, PAIPP2/PHD2, AIPP2/PHD3, PHD4, PHD5 and PHD6), cooperates to form a BAH-PHD bivalent histone reader complex able to read histone H3 lysine 27 trimethylation (H3K27me3) and low-methylated H3K4 histone marks in order to regulate transcription, especially to prevent early flowering; H3K27me3 reader of this complex. CPL2 is subsequently recruited to form a BAH-PHD-CPL2 complex (BPC) in order to silence several H3K27me3 and low-methylated H3K4 enriched loci, including AGO5, via the phosphorylation state-dependent inhibition of Pol II release from the transcriptional start site (e.g. Ser5P-Pol II dephosphorylation). The BPC complex represses flowering by inhibiting the expression of several genes, including AGL6, FT, FUL and SOC1. Prevents the accumulation of intronic heterochromatin-containing genes (e.g. IBM1, At3g05410 and RPP7). Seems to not be involved in vernalization establishment, by contrast to orthologs in grass plants. The protein is ASI1-immunoprecipitated protein 3 of Arabidopsis thaliana (Mouse-ear cress).